The chain runs to 486 residues: RAC-beta serine/threonine-protein kinase A (486 aa).

A PH domain is found at 5–110 (MVIKEGWLQK…WIIAIQTVAN (106 aa)). Serine 133 and serine 136 each carry an O-linked (GlcNAc) serine glycan. In terms of domain architecture, Protein kinase spans 157 to 414 (FDYLKLLGKG…AQEVMSHRFF (258 aa)). Residues 163–171 (LGKGTFGKV) and lysine 186 contribute to the ATP site. Residue aspartate 280 is the Proton acceptor of the active site. The O-linked (GlcNAc) threonine glycan is linked to threonine 311. Threonine 314 carries the phosphothreonine modification. Threonine 318 is a glycosylation site (O-linked (GlcNAc) threonine). Residues 415-486 (VSINWQDVTE…QFSYSASIRE (72 aa)) form the AGC-kinase C-terminal domain. The disordered stretch occupies residues 455-486 (LTPPDRYDNLDALESDQRPHFPQFSYSASIRE). Over residues 459–473 (DRYDNLDALESDQRP) the composition is skewed to basic and acidic residues. Residue serine 479 is modified to Phosphoserine. Serine 479 carries an O-linked (GlcNAc) serine; alternate glycan.

Belongs to the protein kinase superfamily. AGC Ser/Thr protein kinase family. RAC subfamily. In terms of processing, phosphorylation on Thr-314 and Ser-479 is required for full activity. Phosphorylation of the activation loop at Thr-314 by PDPK1/PDK1 is a prerequisite for full activation. Phosphorylation by mTORC2 at Ser-479 in response to growth factors plays a key role in AKT1 activation by facilitating subsequent phosphorylation of the activation loop by PDPK1/PDK1.

The catalysed reaction is L-seryl-[protein] + ATP = O-phospho-L-seryl-[protein] + ADP + H(+). It catalyses the reaction L-threonyl-[protein] + ATP = O-phospho-L-threonyl-[protein] + ADP + H(+). Two specific sites, one in the kinase domain (Thr-314) and the other in the C-terminal regulatory region (Ser-479), need to be phosphorylated for its full activation. Its function is as follows. Akt2-a is one of several closely related serine/threonine-protein kinases known as the AKT kinase, and which regulate many processes including metabolism, proliferation, cell survival, growth and angiogenesis. This is mediated through serine and/or threonine phosphorylation of a range of downstream substrates. Over 100 substrate candidates have been reported so far, but for most of them, no isoform specificity has been reported. May be involved in the inhibition of ciliogenesis. The sequence is that of RAC-beta serine/threonine-protein kinase A (akt2-a) from Xenopus laevis (African clawed frog).